The primary structure comprises 99 residues: Translation initiation factor 1A (99 aa).

The 74-residue stretch at 11-84 folds into the S1-like domain; that stretch reads RRVRTPRRGE…EKADIVWRYT (74 aa).

The protein belongs to the eIF-1A family.

Functionally, seems to be required for maximal rate of protein biosynthesis. Enhances ribosome dissociation into subunits and stabilizes the binding of the initiator Met-tRNA(I) to 40 S ribosomal subunits. In Methanothermobacter thermautotrophicus (strain ATCC 29096 / DSM 1053 / JCM 10044 / NBRC 100330 / Delta H) (Methanobacterium thermoautotrophicum), this protein is Translation initiation factor 1A (eIF1A).